Reading from the N-terminus, the 277-residue chain is tRNA uridine(34) hydroxylase (277 aa).

The region spanning 126–221 (SSPDVHVIDT…YLETMRGDDS (96 aa)) is the Rhodanese domain. Cysteine 181 functions as the Cysteine persulfide intermediate in the catalytic mechanism.

It belongs to the TrhO family.

It catalyses the reaction uridine(34) in tRNA + AH2 + O2 = 5-hydroxyuridine(34) in tRNA + A + H2O. Functionally, catalyzes oxygen-dependent 5-hydroxyuridine (ho5U) modification at position 34 in tRNAs. The protein is tRNA uridine(34) hydroxylase of Anaplasma marginale (strain St. Maries).